The primary structure comprises 406 residues: Accessory Sec system protein translocase subunit SecY2 (406 aa).

Helical transmembrane passes span 14 to 34, 63 to 83, 108 to 128, 131 to 151, 156 to 176, 190 to 210, 246 to 266, 285 to 305, 344 to 364, and 368 to 388; these read SWTV…LPFI, FSLF…WQMF, FAIA…EVGI, GLAI…LVWL, SFFG…ANLP, LPII…AVIV, FMYA…IQIL, PIWL…FAFV, AVIG…IVLI, and YLQL…VYNV.

This sequence belongs to the SecY/SEC61-alpha family. SecY2 subfamily. Component of the accessory SecA2/SecY2 protein translocase complex required to export cell wall proteins. May form heterotrimers with SecE and SecG subunits.

It is found in the cell membrane. Part of the accessory SecA2/SecY2 system specifically required for export of possible cell wall proteins. The central subunit of a protein translocation channel. The polypeptide is Accessory Sec system protein translocase subunit SecY2 (Streptococcus salivarius (strain CCHSS3)).